Reading from the N-terminus, the 2139-residue chain is MVNENTRMYVPEENHQGSNYGSPRPAHANMNANAAAGLAPEHIPTPGAALSWQAAIDAARQAKLMGSAGNATISTVSSTQRKRQQYGKPKKQGGTTATRPPRALLCLTLKNPIRRACISIVEWKPFEIIILLTIFANCVALAIYIPFPEDDSNATNSNLERVEYLFLIIFTVEAFLKVIAYGLLFHPNAYLRNGWNLLDFIIVVVGLFSAILEQATKADGANALGGKGAGFDVKALRAFRVLRPLRLVSGVPSLQVVLNSIIKAMVPLLHIALLVLFVIIIYAIIGLELFMGKMHKTCYNQEGIIDVPAEEDPSPCALETGHGRQCQNGTVCKPGWDGPKHGITNFDNFAFAMLTVFQCITMEGWTDVLYWMQDAMGYELPWVYFVSLVIFGSFFVLNLVLGVLSGEFSKEREKAKARGDFQKLREKQQLEEDLKGYLDWITQAEDIDPENEDEGMDEDKPRNMSMPTSETESVNTENVAGGDIEGENCGARLAHRISKSKFSRYWRRWNRFCRRKCRAAVKSNVFYWLVIFLVFLNTLTIASEHYNQPHWLTEVQDTANKALLALFTAEMLLKMYSLGLQAYFVSLFNRFDCFIVCGGILETILVETKIMSPLGISVLRCVRLLRIFKITRYWNSLSNLVASLLNSVRSIASLLLLLFLFIIIFSLLGMQLFGGKFNFDEMQTRRSTFDNFPQSLLTVFQILTGEDWNSVMYDGIMAYGGPSFPGMLVCIYFIILFICGNYILLNVFLAIAVDNLADAESLTSAQKEEEEEKERKKLARTASPEKKQEVMEKPAVEESKEEKIELKSITADGESPPTTKINMDDLQPSENEDKSPHSNPDTAGEEDEEEPEMPVGPRPRPLSELHLKEKAVPMPEASAFFIFSPNNRFRLQCHRIVNDTIFTNLILFFILLSSISLAAEDPVQHTSFRNHILGNADYVFTSIFTLEIILKMTAYGAFLHKGSFCRNYFNILDLLVVSVSLISFGIQSSAINVVKILRVLRVLRPLRAINRAKGLKHVVQCVFVAIRTIGNIVIVTTLLQFMFACIGVQLFKGKLYTCSDSSKQTEAECKGNYITYKDGEVDHPIIQPRSWENSKFDFDNVLAAMMALFTVSTFEGWPELLYRSIDSHTEDKGPIYNYRVEISIFFIIYIIIIAFFMMNIFVGFVIVTFQEQGEQEYKNCELDKNQRQCVEYALKARPLRRYIPKNQHQYKVWYVVNSTYFEYLMFVLILLNTICLAMQHYGQSCLFKIAMNILNMLFTGLFTVEMILKLIAFKPKGYFSDPWNVFDFLIVIGSIIDVILSETNPAEHTQCSPSMSAEENSRISITFFRLFRVMRLVKLLSRGEGIRTLLWTFIKSFQALPYVALLIVMLFFIYAVIGMQVFGKIALNDTTEINRNNNFQTFPQAVLLLFRCATGEAWQDIMLACMPGKKCAPESEPSNSTEGETPCGSSFAVFYFISFYMLCAFLIINLFVAVIMDNFDYLTRDWSILGPHHLDEFKRIWAEYDPEAKGRIKHLDVVTLLRRIQPPLGFGKLCPHRVACKRLVSMNMPLNSDGTVMFNATLFALVRTALRIKTEGNLEQANEELRAIIKKIWKRTSMKLLDQVVPPAGDDEVTVGKFYATFLIQEYFRKFKKRKEQGLVGKPSQRNALSLQAGLRTLHDIGPEIRRAISGDLTAEEELDKAMKEAVSAASEDDIFRRAGGLFGNHVTYYQSDSRGNFPQTFATQRPLHINKTGNNQADTESPSHEKLVDSTFTPSSYSSTGSNANINNANNTALGRFPHPAGYSSTVSTVEGHGPPLSPAVRVQEAAWKLSSKRCHSRESQGATVNQEIFPDETRSVRMSEEAEYCSEPSLLSTDMFSYQEDEHRQLTCPEEDKREIQPSPKRSFLRSASLGRRASFHLECLKRQKDQGGDISQKTALPLHLVHHQALAVAGLSPLLQRSHSPTTFPRPCPTPPVTPGSRGRPLRPIPTLRLEGAESSEKLNSSFPSIHCSSWSEETTACSGSSSMARRARPVSLTVPSQAGAPGRQFHGSASSLVEAVLISEGLGQFAQDPKFIEVTTQELADACDMTIEEMENAADNILSGGAQQSPNGTLLPFVNCRDPGQDRAVAPEDESCAYALGRGRSEEALADSRSYVSNL.

Residues 1–20 are disordered; that stretch reads MVNENTRMYVPEENHQGSNY. Residues 1–124 are Cytoplasmic-facing; that stretch reads MVNENTRMYV…RACISIVEWK (124 aa). The tract at residues 47–68 is calmodulin-binding; it reads GAALSWQAAIDAARQAKLMGSA. The disordered stretch occupies residues 73-98; sequence ISTVSSTQRKRQQYGKPKKQGGTTAT. Basic residues predominate over residues 80–91; the sequence is QRKRQQYGKPKK. The I repeat unit spans residues 111 to 408; it reads NPIRRACISI…LVLGVLSGEF (298 aa). The helical transmembrane segment at 125–143 threads the bilayer; sequence PFEIIILLTIFANCVALAI. The Extracellular segment spans residues 144 to 158; it reads YIPFPEDDSNATNSN. N153 is a glycosylation site (N-linked (GlcNAc...) asparagine). The helical transmembrane segment at 159–179 threads the bilayer; the sequence is LERVEYLFLIIFTVEAFLKVI. At 180-188 the chain is on the cytoplasmic side; sequence AYGLLFHPN. A helical transmembrane segment spans residues 189–209; sequence AYLRNGWNLLDFIIVVVGLFS. Residues 210–232 lie on the Extracellular side of the membrane; sequence AILEQATKADGANALGGKGAGFD. A helical transmembrane segment spans residues 233 to 251; it reads VKALRAFRVLRPLRLVSGV. Residues 252 to 268 are Cytoplasmic-facing; that stretch reads PSLQVVLNSIIKAMVPL. Residues 269-290 form a helical membrane-spanning segment; it reads LHIALLVLFVIIIYAIIGLELF. Topologically, residues 291-350 are extracellular; it reads MGKMHKTCYNQEGIIDVPAEEDPSPCALETGHGRQCQNGTVCKPGWDGPKHGITNFDNFA. 2 disulfide bridges follow: C298-C326 and C316-C332. An N-linked (GlcNAc...) asparagine glycan is attached at N328. Positions 351–372 form an intramembrane region, pore-forming; the sequence is FAMLTVFQCITMEGWTDVLYWM. The Selectivity filter of repeat I motif lies at 361 to 364; the sequence is TMEG. Residue E363 participates in Ca(2+) binding. Topologically, residues 373–380 are extracellular; that stretch reads QDAMGYEL. The helical transmembrane segment at 381-401 threads the bilayer; sequence PWVYFVSLVIFGSFFVLNLVL. Residues 402–524 lie on the Cytoplasmic side of the membrane; the sequence is GVLSGEFSKE…RKCRAAVKSN (123 aa). Residues 428 to 445 are AID/alpha-interaction domain; mediates interaction with the beta subunit; that stretch reads QQLEEDLKGYLDWITQAE. The interval 449–481 is disordered; sequence PENEDEGMDEDKPRNMSMPTSETESVNTENVAG. Residues 465-478 are compositionally biased toward polar residues; the sequence is SMPTSETESVNTEN. The residue at position 469 (S469) is a Phosphoserine. T476 bears the Phosphothreonine mark. Residues 510 to 756 form an II repeat; sequence NRFCRRKCRA…VFLAIAVDNL (247 aa). The chain crosses the membrane as a helical span at residues 525–543; that stretch reads VFYWLVIFLVFLNTLTIAS. Topologically, residues 544 to 554 are extracellular; the sequence is EHYNQPHWLTE. Residues 555-575 traverse the membrane as a helical segment; it reads VQDTANKALLALFTAEMLLKM. The Cytoplasmic portion of the chain corresponds to 576 to 586; the sequence is YSLGLQAYFVS. Residues 587–606 form a helical membrane-spanning segment; sequence LFNRFDCFIVCGGILETILV. Over 607–615 the chain is Extracellular; that stretch reads ETKIMSPLG. Residues 616-634 form a helical membrane-spanning segment; it reads ISVLRCVRLLRIFKITRYW. At 635–653 the chain is on the cytoplasmic side; that stretch reads NSLSNLVASLLNSVRSIAS. The helical transmembrane segment at 654 to 673 threads the bilayer; sequence LLLLLFLFIIIFSLLGMQLF. The Extracellular segment spans residues 674 to 693; sequence GGKFNFDEMQTRRSTFDNFP. Positions 694–715 form an intramembrane region, pore-forming; that stretch reads QSLLTVFQILTGEDWNSVMYDG. Positions 704–707 match the Selectivity filter of repeat II motif; the sequence is TGED. E706 is a binding site for Ca(2+). Over 716-725 the chain is Extracellular; it reads IMAYGGPSFP. A helical membrane pass occupies residues 726-745; it reads GMLVCIYFIILFICGNYILL. Residues 746 to 900 lie on the Cytoplasmic side of the membrane; that stretch reads NVFLAIAVDN…LQCHRIVNDT (155 aa). The segment at 764-861 is disordered; that stretch reads SAQKEEEEEK…EMPVGPRPRP (98 aa). Over residues 783–806 the composition is skewed to basic and acidic residues; that stretch reads SPEKKQEVMEKPAVEESKEEKIEL. 2 positions are modified to phosphoserine: S808 and S815. Positions 829–876 are interaction with STAC2; the sequence is SENEDKSPHSNPDTAGEEDEEEPEMPVGPRPRPLSELHLKEKAVPMPE. Residues 843-852 are compositionally biased toward acidic residues; sequence AGEEDEEEPE. Residues 887-1169 form an III repeat; the sequence is NRFRLQCHRI…IFVGFVIVTF (283 aa). Residues 901-919 form a helical membrane-spanning segment; the sequence is IFTNLILFFILLSSISLAA. Topologically, residues 920–931 are extracellular; that stretch reads EDPVQHTSFRNH. Residues 932 to 951 form a helical membrane-spanning segment; the sequence is ILGNADYVFTSIFTLEIILK. Topologically, residues 952-967 are cytoplasmic; it reads MTAYGAFLHKGSFCRN. The chain crosses the membrane as a helical span at residues 968–986; the sequence is YFNILDLLVVSVSLISFGI. The Extracellular segment spans residues 987-993; sequence QSSAINV. Residues 994 to 1012 form a helical membrane-spanning segment; the sequence is VKILRVLRVLRPLRAINRA. Residues 1013–1031 are Cytoplasmic-facing; sequence KGLKHVVQCVFVAIRTIGN. A helical transmembrane segment spans residues 1032–1051; it reads IVIVTTLLQFMFACIGVQLF. Topologically, residues 1052–1101 are extracellular; it reads KGKLYTCSDSSKQTEAECKGNYITYKDGEVDHPIIQPRSWENSKFDFDNV. A disulfide bond links C1058 and C1069. The segment at 1089-1178 is dihydropyridine binding; the sequence is RSWENSKFDF…FQEQGEQEYK (90 aa). The segment at residues 1102-1122 is an intramembrane region (pore-forming); the sequence is LAAMMALFTVSTFEGWPELLY. The Selectivity filter of repeat III motif lies at 1113-1116; the sequence is TFEG. E1115 contributes to the Ca(2+) binding site. Topologically, residues 1123 to 1139 are extracellular; the sequence is RSIDSHTEDKGPIYNYR. The helical transmembrane segment at 1140-1161 threads the bilayer; sequence VEISIFFIIYIIIIAFFMMNIF. The Cytoplasmic segment spans residues 1162–1219; the sequence is VGFVIVTFQEQGEQEYKNCELDKNQRQCVEYALKARPLRRYIPKNQHQYKVWYVVNST. Residues 1206 to 1479 form an IV repeat; the sequence is NQHQYKVWYV…LFVAVIMDNF (274 aa). Residues 1220-1241 form a helical membrane-spanning segment; it reads YFEYLMFVLILLNTICLAMQHY. Residues 1242–1249 lie on the Extracellular side of the membrane; it reads GQSCLFKI. The helical transmembrane segment at 1250–1271 threads the bilayer; sequence AMNILNMLFTGLFTVEMILKLI. Residues 1272–1281 are Cytoplasmic-facing; the sequence is AFKPKGYFSD. A helical transmembrane segment spans residues 1282–1301; that stretch reads PWNVFDFLIVIGSIIDVILS. Residues 1302–1324 lie on the Extracellular side of the membrane; sequence ETNPAEHTQCSPSMSAEENSRIS. A helical transmembrane segment spans residues 1325 to 1343; it reads ITFFRLFRVMRLVKLLSRG. The Cytoplasmic portion of the chain corresponds to 1344-1361; sequence EGIRTLLWTFIKSFQALP. A helical transmembrane segment spans residues 1362–1382; it reads YVALLIVMLFFIYAVIGMQVF. The Extracellular portion of the chain corresponds to 1383 to 1404; it reads GKIALNDTTEINRNNNFQTFPQ. N1388 carries an N-linked (GlcNAc...) asparagine glycan. Positions 1405–1423 form an intramembrane region, pore-forming; it reads AVLLLFRCATGEAWQDIML. The short motif at 1414-1417 is the Selectivity filter of repeat IV element; it reads TGEA. Residues 1424-1451 are Extracellular-facing; that stretch reads ACMPGKKCAPESEPSNSTEGETPCGSSF. Residues 1430-1498 form a dihydropyridine binding region; it reads KCAPESEPSN…LGPHHLDEFK (69 aa). C1431 and C1447 are disulfide-bonded. An N-linked (GlcNAc...) asparagine glycan is attached at N1439. The tract at residues 1444–1486 is phenylalkylamine binding; it reads ETPCGSSFAVFYFISFYMLCAFLIINLFVAVIMDNFDYLTRDW. Residues 1452-1476 traverse the membrane as a helical segment; it reads AVFYFISFYMLCAFLIINLFVAVIM. Topologically, residues 1477-2139 are cytoplasmic; sequence DNFDYLTRDW…ADSRSYVSNL (663 aa). The tract at residues 1611 to 1638 is important for interaction with STAC1, STAC2 and STAC3; sequence DEVTVGKFYATFLIQEYFRKFKKRKEQG. Positions 1611–1644 are calmodulin-binding; that stretch reads DEVTVGKFYATFLIQEYFRKFKKRKEQGLVGKPS. Residues 1617 to 1637 are calmodulin-binding IQ region; that stretch reads KFYATFLIQEYFRKFKKRKEQ. Residues 1651–1670 form an important for localization in at the junctional membrane region; the sequence is LQAGLRTLHDIGPEIRRAIS. Residues S1670 and S1691 each carry the phosphoserine modification. Composition is skewed to polar residues over residues 1732-1741 and 1751-1763; these read KTGNNQADTE and STFTPSSYSSTGS. The segment at 1732-1773 is disordered; sequence KTGNNQADTESPSHEKLVDSTFTPSSYSSTGSNANINNANNT. Over residues 1764–1773 the composition is skewed to low complexity; that stretch reads NANINNANNT. S1897 bears the Phosphoserine; by PKA mark. The segment at 1940 to 1966 is disordered; the sequence is RSHSPTTFPRPCPTPPVTPGSRGRPLR. The segment covering 1947–1957 has biased composition (pro residues); the sequence is FPRPCPTPPVT.

It belongs to the calcium channel alpha-1 subunit (TC 1.A.1.11) family. CACNA1C subfamily. As to quaternary structure, component of a calcium channel complex consisting of a pore-forming alpha subunit (CACNA1C) and ancillary beta, gamma and delta subunits. The channel complex contains alpha, beta, gamma and delta subunits in a 1:1:1:1 ratio, i.e. it contains only one of each type of subunit. CACNA1C channel activity is modulated by ancillary subunits, such as CACNB1, CACNB2, CACNB3, CACNA2D1 and CACNA2D4. Interacts with the gamma subunits CACNG4, CACNG6, CACNG7 and CACNG8. Interacts with CACNB1. Interacts with CACNB2. Identified in a complex with CACNA2D4 and CACNB3. Interacts with CACNB3. Interacts with CACNA2D1. Interacts with CACNA2D4. Interacts with CALM1. Interacts (via the N-terminus and the C-terminal C and IQ motifs) with CABP1; this inhibits Ca(2+)-dependent channel inactivation. The binding via the C motif is calcium independent whereas the binding via IQ requires the presence of calcium and is mutually exclusive with calmodulin binding. The binding to the cytoplasmic N-terminal domain is calcium independent but is essential for the channel modulation. Interacts (via C-terminal CDB motif) with CABP5; in a calcium-dependent manner. Interacts with CIB1; the interaction increases upon cardiomyocytes hypertrophy. Interacts with STAC2 and STAC3; this inhibits channel inactivation. In terms of processing, phosphorylation by PKA at Ser-1897 activates the channel. Elevated levels of blood glucose lead to increased phosphorylation by PKA. As to expression, detected in embryonic heart. Detected in retina in rod bipolar cells. Detected in tibialis artery (at protein level). Detected in smooth muscle cells from tibialis artery and in mesenteric artery. High expression in heart, followed by brain and spinal cord.

It is found in the cell membrane. The protein localises to the sarcolemma. The protein resides in the perikaryon. Its subcellular location is the postsynaptic density membrane. It localises to the cell projection. It is found in the dendrite. The protein localises to the T-tubule. It carries out the reaction Ca(2+)(in) = Ca(2+)(out). Its activity is regulated as follows. Inhibited by dihydropyridines (DHP), such as isradipine. Inhibited by nifedipine. Channel activity is regulated by Ca(2+) and calmodulin. Binding of STAC1, STAC2 or STAC3 to a region that overlaps with the calmodulin binding site inhibits channel inactivation by Ca(2+) and calmodulin. Binding of calmodulin or CABP1 at the same regulatory sites results in opposite effects on the channel function. Shear stress and pressure increases calcium channel activity. Functionally, pore-forming, alpha-1C subunit of the voltage-gated calcium channel that gives rise to L-type calcium currents. Mediates influx of calcium ions into the cytoplasm, and thereby triggers calcium release from the sarcoplasm. Plays an important role in excitation-contraction coupling in the heart. Required for normal heart development and normal regulation of heart rhythm. Required for normal contraction of smooth muscle cells in blood vessels and in the intestine. Essential for normal blood pressure regulation via its role in the contraction of arterial smooth muscle cells. Long-lasting (L-type) calcium channels belong to the 'high-voltage activated' (HVA) group. The polypeptide is Voltage-dependent L-type calcium channel subunit alpha-1C (Cacna1c) (Mus musculus (Mouse)).